We begin with the raw amino-acid sequence, 398 residues long: NADH-quinone oxidoreductase subunit D (398 aa).

The protein belongs to the complex I 49 kDa subunit family. NDH-1 is composed of 14 different subunits. Subunits NuoB, C, D, E, F, and G constitute the peripheral sector of the complex.

The protein resides in the cell inner membrane. It carries out the reaction a quinone + NADH + 5 H(+)(in) = a quinol + NAD(+) + 4 H(+)(out). NDH-1 shuttles electrons from NADH, via FMN and iron-sulfur (Fe-S) centers, to quinones in the respiratory chain. The immediate electron acceptor for the enzyme in this species is believed to be ubiquinone. Couples the redox reaction to proton translocation (for every two electrons transferred, four hydrogen ions are translocated across the cytoplasmic membrane), and thus conserves the redox energy in a proton gradient. In Bradyrhizobium diazoefficiens (strain JCM 10833 / BCRC 13528 / IAM 13628 / NBRC 14792 / USDA 110), this protein is NADH-quinone oxidoreductase subunit D.